We begin with the raw amino-acid sequence, 160 residues long: Protein Vago (160 aa).

The N-terminal stretch at 1 to 23 (MESISSMIYLVAMMSLIIGGSQA) is a signal peptide.

Expressed in fat body.

It is found in the secreted. Its function is as follows. Probably involved in the antiviral immune response. May have a role in controlling viral load in the adult fat body, after infection with viruses such as the Drosophila C virus. This Drosophila melanogaster (Fruit fly) protein is Protein Vago.